The sequence spans 92 residues: Neuropeptide ShK-like2 (92 aa).

A signal peptide spans 1-23 (MTTIRCVLFAVLLFAYCALLIKA). Residues 24 to 51 (RSIDAEAEKTWQEEETKTVAEKSPLKKR) constitute a propeptide that is removed on maturation. 3 disulfide bridges follow: Cys53–Cys92, Cys61–Cys85, and Cys70–Cys89.

In terms of tissue distribution, transcripts are first expressed mostly in the endoderm (with rare ectodermal cells) in the late planulae. They are mostly expressed in endodermal ganglion cells in the body column and tentacles in primary polyps, as well as in a small number of ectodermal sensory neurons in tentacles and body wall. They are not expressed in nematocytes. Transcripts are predominantly expressed in ectodermal sensory neurons in early and late planulae. They are expressed in endodermal ganglion cells in the body column and tentacles in primary polyps, as well as in a small number of ectodermal neurons in pharynx. They are not expressed in nematocytes.

In terms of biological role, in vivo, this neuropeptide induces contraction paralysis followed by death (within 2 hours) on 4 zebrafish larvae on the 15 tested. Also induces body contraction in Nematostella 11-dpf polyps. In Nematostella vectensis (Starlet sea anemone), this protein is Neuropeptide ShK-like2.